Reading from the N-terminus, the 750-residue chain is Photosystem I P700 chlorophyll a apoprotein A1 (750 aa).

8 helical membrane-spanning segments follow: residues 70–93 (VFSA…FHGA), 156–179 (LYCT…FHYH), 195–219 (LNHH…HVSL), 291–309 (IAHH…GHMY), 346–369 (WHAQ…HHMY), 385–411 (LSLF…IFMV), 433–455 (AIIS…LYIH), and 531–549 (FLVH…LILL). Cysteine 573 and cysteine 582 together coordinate [4Fe-4S] cluster. The next 2 membrane-spanning stretches (helical) occupy residues 589-610 (HVFL…HFSW) and 664-686 (LSAY…MFLF). A chlorophyll a'-binding site is contributed by histidine 675. Chlorophyll a-binding residues include methionine 683 and tyrosine 691. Tryptophan 692 provides a ligand contact to phylloquinone. The helical transmembrane segment at 724–744 (AVGVTHYLLGGIATTWAFFLA) threads the bilayer.

The protein belongs to the PsaA/PsaB family. As to quaternary structure, the PsaA/B heterodimer binds the P700 chlorophyll special pair and subsequent electron acceptors. PSI consists of a core antenna complex that captures photons, and an electron transfer chain that converts photonic excitation into a charge separation. The eukaryotic PSI reaction center is composed of at least 11 subunits. Requires P700 is a chlorophyll a/chlorophyll a' dimer, A0 is one or more chlorophyll a, A1 is one or both phylloquinones and FX is a shared 4Fe-4S iron-sulfur center. as cofactor.

It is found in the plastid. It localises to the chloroplast thylakoid membrane. It carries out the reaction reduced [plastocyanin] + hnu + oxidized [2Fe-2S]-[ferredoxin] = oxidized [plastocyanin] + reduced [2Fe-2S]-[ferredoxin]. Functionally, psaA and PsaB bind P700, the primary electron donor of photosystem I (PSI), as well as the electron acceptors A0, A1 and FX. PSI is a plastocyanin-ferredoxin oxidoreductase, converting photonic excitation into a charge separation, which transfers an electron from the donor P700 chlorophyll pair to the spectroscopically characterized acceptors A0, A1, FX, FA and FB in turn. Oxidized P700 is reduced on the lumenal side of the thylakoid membrane by plastocyanin. The protein is Photosystem I P700 chlorophyll a apoprotein A1 of Olimarabidopsis pumila (Dwarf rocket).